Here is a 300-residue protein sequence, read N- to C-terminus: Epimerase family protein MW0731 (300 aa).

Belongs to the NAD(P)-dependent epimerase/dehydratase family. SDR39U1 subfamily.

The polypeptide is Epimerase family protein MW0731 (Staphylococcus aureus (strain MW2)).